Here is a 109-residue protein sequence, read N- to C-terminus: Nucleoid-associated protein Asuc_0997 (109 aa).

The tract at residues 1-23 (MFGKGGLGGLMKQAQQMQERMQK) is disordered.

This sequence belongs to the YbaB/EbfC family. Homodimer.

The protein resides in the cytoplasm. It localises to the nucleoid. Binds to DNA and alters its conformation. May be involved in regulation of gene expression, nucleoid organization and DNA protection. This Actinobacillus succinogenes (strain ATCC 55618 / DSM 22257 / CCUG 43843 / 130Z) protein is Nucleoid-associated protein Asuc_0997.